We begin with the raw amino-acid sequence, 292 residues long: MSMPATSTKTTKLATSLIDEYALLGWRAMLTEVNLSPKPGLVDRINCGAHKDMALEDFHRSALAIQGWLPRFIEFGACSAEMAPEAVLNGLRPIGMACEGDMFRATAGVNTHKGSIFSLGLLCAAIGRLLQLNQSVTPITICATAASFCRGLTDRELRTNNSQLTAGQRLYQQLGLTGARGEAEAGYPLVINHALPHYLTLLDQGLDPELALLDTLLLLMATNGDTNVASRGGEGGLRWLQREAQTLLNNGGIRTPADLDYLRQFDRECIERNISPGGSADLLILTWFLAQI.

The protein belongs to the CitG/MdcB family.

It catalyses the reaction 3'-dephospho-CoA + ATP = 2'-(5''-triphospho-alpha-D-ribosyl)-3'-dephospho-CoA + adenine. In terms of biological role, catalyzes the formation of 2-(5''-triphosphoribosyl)-3'-dephosphocoenzyme-A, the precursor of the prosthetic group of the holo-acyl carrier protein (gamma chain) of citrate lyase, from ATP and dephospho-CoA. This chain is 2-(5''-triphosphoribosyl)-3'-dephosphocoenzyme-A synthase (citG), found in Escherichia coli O6:H1 (strain CFT073 / ATCC 700928 / UPEC).